The chain runs to 548 residues: pH-responsive protein 1 (548 aa).

The signal sequence occupies residues 1–20 (MYSLIKSLATFATLFSLTLA). Residue Asn41 is glycosylated (N-linked (GlcNAc...) asparagine). A disulfide bridge links Cys82 with Cys111. N-linked (GlcNAc...) asparagine glycans are attached at residues Asn173 and Asn261. Disulfide bonds link Cys224-Cys358, Cys242-Cys273, Cys381-Cys432, Cys390-Cys456, and Cys409-Cys414. The interval 483 to 518 (GKASSSGGSSKSGSSSASASGSSSSSTSSGSSSSSG) is disordered. The GPI-anchor amidated serine moiety is linked to residue Ser517. Positions 518–548 (GVKATQQMSMVKLVSIITIVTAFVGGMSVVF) are cleaved as a propeptide — removed in mature form.

This sequence belongs to the glycosyl hydrolase 72 family.

Its subcellular location is the cell membrane. Its function is as follows. Required for apical cell growth and plays an essential role in morphogenesis. May be integral to the pathogenic ability of the organism. The polypeptide is pH-responsive protein 1 (PHR1) (Candida albicans (strain SC5314 / ATCC MYA-2876) (Yeast)).